The following is a 260-amino-acid chain: Triosephosphate isomerase (260 aa).

11-13 (NWK) lines the substrate pocket. Catalysis depends on histidine 103, which acts as the Electrophile. Glutamate 175 acts as the Proton acceptor in catalysis. Residues glycine 181, serine 220, and 241 to 242 (GG) contribute to the substrate site.

The protein belongs to the triosephosphate isomerase family. In terms of assembly, homodimer.

The protein resides in the cytoplasm. The catalysed reaction is D-glyceraldehyde 3-phosphate = dihydroxyacetone phosphate. It participates in carbohydrate biosynthesis; gluconeogenesis. Its pathway is carbohydrate degradation; glycolysis; D-glyceraldehyde 3-phosphate from glycerone phosphate: step 1/1. Functionally, involved in the gluconeogenesis. Catalyzes stereospecifically the conversion of dihydroxyacetone phosphate (DHAP) to D-glyceraldehyde-3-phosphate (G3P). This is Triosephosphate isomerase from Shewanella pealeana (strain ATCC 700345 / ANG-SQ1).